Consider the following 2177-residue polypeptide: Protein sidekick-2 (2177 aa).

The N-terminal stretch at 1–26 is a signal peptide; sequence MKGLGVPAAALLWGGLSALLPPSLPA. The Extracellular segment spans residues 27–1937; that stretch reads DDVSPYFKTE…ANPFYEEWWF (1911 aa). Ig-like C2-type domains are found at residues 31–113, 118–205, 220–299, 313–401, 407–496, and 501–590; these read PYFK…TEVQ, GSFE…QPIT, PTII…SSVP, PQFV…TYLA, PNIT…ADLV, and TRIT…AHLR. An intrachain disulfide couples Cys-53 to Cys-96. Residues Asn-198 and Asn-228 are each glycosylated (N-linked (GlcNAc...) asparagine). Cystine bridges form between Cys-242/Cys-289 and Cys-335/Cys-385. N-linked (GlcNAc...) asparagine glycosylation occurs at Asn-408. 2 cysteine pairs are disulfide-bonded: Cys-428–Cys-480 and Cys-522–Cys-574. N-linked (GlcNAc...) asparagine glycosylation is found at Asn-582, Asn-614, Asn-709, Asn-748, Asn-809, Asn-941, and Asn-953. Fibronectin type-III domains lie at 597–693, 698–794, 799–898, 902–996, 1000–1099, 1104–1202, 1207–1304, 1305–1402, 1407–1504, 1509–1626, 1631–1727, 1731–1826, and 1829–1928; these read APES…LPEE, PPQN…TLQG, PPGN…THED, PVGH…VPPE, APTN…TLQA, APAN…TRES, GPSN…TLDD, VPGP…TEKR, PPSK…TLQA, APTI…VGEA, APQN…TQQA, APGS…TGPG, and APGP…AQKA. N-linked (GlcNAc...) asparagine glycans are attached at residues Asn-1107, Asn-1210, Asn-1261, Asn-1346, Asn-1462, Asn-1580, Asn-1593, Asn-1675, Asn-1694, Asn-1746, and Asn-1820. Residues 1938–1958 form a helical membrane-spanning segment; it reads LVVIALVGLIFILLLVFVLII. At 1959 to 2177 the chain is on the cytoplasmic side; it reads RGQSKKYAKK…APIGGFSSFV (219 aa). Disordered stretches follow at residues 2044 to 2071 and 2103 to 2177; these read AESS…VDPA and QAYS…SSFV. Polar residues-rich tracts occupy residues 2045–2063 and 2119–2130; these read ESSS…QGSD and PLSNSTSTQQGS. The span at 2142-2151 shows a compositional bias: pro residues; it reads PQTPGNPPSQ. The PDZ-binding signature appears at 2171 to 2177; it reads GGFSSFV.

It belongs to the sidekick family. As to quaternary structure, homodimer; mediates homophilic interactions to promote cell adhesion. Expressed by non-overlapping subsets of retinal neurons. SDK1, SDK2, DSCAM and DSCAML1 are expressed in non-overlapping subsets of interneurons and retinal ganglion cells (RGCs) that form synapses in distinct inner plexiform layer (IPL) sublaminae.

The protein localises to the cell membrane. The protein resides in the synapse. Adhesion molecule that promotes lamina-specific synaptic connections in the retina. Expressed in specific subsets of interneurons and retinal ganglion cells (RGCs) and promotes synaptic connectivity via homophilic interactions. The chain is Protein sidekick-2 from Gallus gallus (Chicken).